A 670-amino-acid chain; its full sequence is Mannosyl-oligosaccharide alpha-1,2-mannosidase IA (670 aa).

The Cytoplasmic segment spans residues 1-30; it reads MTGILPTYQRFVNGVPVPSISRRSFRLREK. The helical; Signal-anchor for type II membrane protein transmembrane segment at 31-51 threads the bilayer; that stretch reads YLIVSVLLTFGIVWLGALFYL. At 52–670 the chain is on the lumenal side; it reads PEFKSSNSVN…EPAHAQNNRI (619 aa). N-linked (GlcNAc...) asparagine glycosylation occurs at Asn-61. A disordered region spans residues 135–177; the sequence is DVAPSVSSSRGPSKPPVDAIEEPAVGNNAANKDVSPSGPKAES. A disulfide bond links Cys-480 and Cys-512. Residue Glu-526 is the Proton donor of the active site. Residue Thr-637 coordinates Ca(2+).

It belongs to the glycosyl hydrolase 47 family. Ca(2+) serves as cofactor. N-glycosylated. Contains high mannose-type oligosaccharides.

The protein resides in the golgi apparatus membrane. It carries out the reaction N(4)-(alpha-D-Man-(1-&gt;2)-alpha-D-Man-(1-&gt;2)-alpha-D-Man-(1-&gt;3)-[alpha-D-Man-(1-&gt;2)-alpha-D-Man-(1-&gt;3)-[alpha-D-Man-(1-&gt;2)-alpha-D-Man-(1-&gt;6)]-alpha-D-Man-(1-&gt;6)]-beta-D-Man-(1-&gt;4)-beta-D-GlcNAc-(1-&gt;4)-beta-D-GlcNAc)-L-asparaginyl-[protein] (N-glucan mannose isomer 9A1,2,3B1,2,3) + 4 H2O = N(4)-(alpha-D-Man-(1-&gt;3)-[alpha-D-Man-(1-&gt;3)-[alpha-D-Man-(1-&gt;6)]-alpha-D-Man-(1-&gt;6)]-beta-D-Man-(1-&gt;4)-beta-D-GlcNAc-(1-&gt;4)-beta-D-GlcNAc)-L-asparaginyl-[protein] (N-glucan mannose isomer 5A1,2) + 4 beta-D-mannose. The catalysed reaction is N(4)-(alpha-D-Man-(1-&gt;2)-alpha-D-Man-(1-&gt;2)-alpha-D-Man-(1-&gt;3)-[alpha-D-Man-(1-&gt;3)-[alpha-D-Man-(1-&gt;2)-alpha-D-Man-(1-&gt;6)]-alpha-D-Man-(1-&gt;6)]-beta-D-Man-(1-&gt;4)-beta-D-GlcNAc-(1-&gt;4)-beta-D-GlcNAc)-L-asparaginyl-[protein] (N-glucan mannose isomer 8A1,2,3B1,3) + 3 H2O = N(4)-(alpha-D-Man-(1-&gt;3)-[alpha-D-Man-(1-&gt;3)-[alpha-D-Man-(1-&gt;6)]-alpha-D-Man-(1-&gt;6)]-beta-D-Man-(1-&gt;4)-beta-D-GlcNAc-(1-&gt;4)-beta-D-GlcNAc)-L-asparaginyl-[protein] (N-glucan mannose isomer 5A1,2) + 3 beta-D-mannose. It functions in the pathway protein modification; protein glycosylation. Its activity is regulated as follows. Strongly inhibited by 1-deoxymannojirimycin, an inhibitor of class I alpha-mannosidases, and by EDTA. EDTA inhibition is reversed by the addition of calcium, but not of magnesium. Its function is as follows. Involved in the maturation of Asn-linked oligosaccharides. Converts Man(9)GlcNAc(2) to Man(5)GlcNAc(2) primarily through the Man(7)GlcNAc(2) isomer C processing intermediate. The sequence is that of Mannosyl-oligosaccharide alpha-1,2-mannosidase IA from Spodoptera frugiperda (Fall armyworm).